A 556-amino-acid chain; its full sequence is Arginine--tRNA ligase (556 aa).

Positions Ala133–His143 match the 'HIGH' region motif.

Belongs to the class-I aminoacyl-tRNA synthetase family. In terms of assembly, monomer.

The protein resides in the cytoplasm. It carries out the reaction tRNA(Arg) + L-arginine + ATP = L-arginyl-tRNA(Arg) + AMP + diphosphate. The polypeptide is Arginine--tRNA ligase (Dehalococcoides mccartyi (strain ATCC BAA-2100 / JCM 16839 / KCTC 5957 / BAV1)).